Consider the following 70-residue polypeptide: Conotoxin Lt11.6 (70 aa).

The first 26 residues, 1 to 26 (MMFRLTSVGSFLLVIVFLNLVVLTNA), serve as a signal peptide directing secretion. Disulfide bonds link C27–C41, C34–C46, C40–C50, and C45–C54. The propeptide occupies 58-70 (AQRQKLLRSFGQR).

The protein belongs to the conotoxin I2 superfamily. As to expression, expressed by the venom duct.

Its subcellular location is the secreted. This chain is Conotoxin Lt11.6, found in Conus litteratus (Lettered cone).